A 524-amino-acid polypeptide reads, in one-letter code: Cytochrome P450 52A6 (524 aa).

Residues 17 to 34 (WYTVITLAALVFLISSNI) traverse the membrane as a helical segment. C472 serves as a coordination point for heme.

It belongs to the cytochrome P450 family. Heme is required as a cofactor.

Its subcellular location is the membrane. Functionally, together with an NADPH cytochrome P450 the enzyme system catalyzes the terminal hydroxylation as the first step in the assimilation of alkanes and fatty acids. Preferentially hydroxylates hexadecane. The polypeptide is Cytochrome P450 52A6 (CYP52A6) (Candida tropicalis (Yeast)).